Consider the following 396-residue polypeptide: Tryptophan synthase beta chain (396 aa).

Lys86 carries the N6-(pyridoxal phosphate)lysine modification.

This sequence belongs to the TrpB family. As to quaternary structure, tetramer of two alpha and two beta chains. Pyridoxal 5'-phosphate is required as a cofactor.

The catalysed reaction is (1S,2R)-1-C-(indol-3-yl)glycerol 3-phosphate + L-serine = D-glyceraldehyde 3-phosphate + L-tryptophan + H2O. It functions in the pathway amino-acid biosynthesis; L-tryptophan biosynthesis; L-tryptophan from chorismate: step 5/5. Its function is as follows. The beta subunit is responsible for the synthesis of L-tryptophan from indole and L-serine. The sequence is that of Tryptophan synthase beta chain from Vibrio cholerae serotype O1 (strain ATCC 39315 / El Tor Inaba N16961).